Here is a 567-residue protein sequence, read N- to C-terminus: Sporulation-specific protein 5 (567 aa).

Over residues 1–18 (MNGIITPQKQKQLMSSPS) the composition is skewed to polar residues. 2 disordered regions span residues 1–39 (MNGI…VDVN) and 52–76 (ILLT…KKPN). Positions 21–35 (PLSTTELSTPTSQTT) are enriched in low complexity. Residues 56–66 (PGTSPNATPGS) are compositionally biased toward polar residues. 2 RRM domains span residues 296-380 (RNVY…SLQD) and 384-462 (TNLY…FADS).

Its subcellular location is the cytoplasm. In terms of biological role, RNA-binding protein which plays a role in sporulation. Regulates the progression of meiosis I and may function in the vicinity of the Mei2 dot. The chain is Sporulation-specific protein 5 (spo5) from Schizosaccharomyces pombe (strain 972 / ATCC 24843) (Fission yeast).